Here is a 317-residue protein sequence, read N- to C-terminus: WSCD family member CG9164 (317 aa).

Residues 8 to 28 (FFGVSATIIIYIGGVLFLSMN) form a helical membrane-spanning segment. Residues asparagine 151, asparagine 227, and asparagine 233 are each glycosylated (N-linked (GlcNAc...) asparagine).

The protein belongs to the WSCD family.

The protein localises to the membrane. The chain is WSCD family member CG9164 from Drosophila melanogaster (Fruit fly).